The primary structure comprises 138 residues: Small ribosomal subunit protein uS9 (138 aa).

A disordered region spans residues 99–138; it reads DPDNRPPLKTEGYLTRDPRAKERKKYGLHKARKAPQYSKR. Positions 100–118 are enriched in basic and acidic residues; that stretch reads PDNRPPLKTEGYLTRDPRA. Basic residues predominate over residues 119–138; it reads KERKKYGLHKARKAPQYSKR.

This sequence belongs to the universal ribosomal protein uS9 family.

In Nostoc punctiforme (strain ATCC 29133 / PCC 73102), this protein is Small ribosomal subunit protein uS9.